A 498-amino-acid chain; its full sequence is MKINPTTSVPGVSTLEKENLGRISQIIGPVLDVAFPPGKMPNIYNALVVKGQDTAGQQINVTCEVQQLLGNNRVRAVAMSATDGLTRGMEVIDTGTALSVPVGGATLGRIFNVLGEPVDNLGPVDTRTTSPIHKSAPAFIQLDTKLSIFETGIKVVDLLAPYRRGGKIGLFGGAGVGKTVLIMELINNIAKAHGGVSVFGGVGERTREGNDLYMEMKESGVINEQNLAESKVALVYGQMNEPPGARMRVGLTALTMAEYFRDVNEQDVLLFIDNIFRFVQAGSEVSALLGRMPSAVGYQPTLSTEMGTLQERITSTKEGSITSIQAVYVPADDLTDPAPATTFAHLDATTVLSRGLAAKGIYPAVDPLDSTSTMLQPRIVGEEHYETAQRVKQTLQRYNELQDIIAILGLDELSEEDRLTVARARKIERFLSQPFFVAEVFTGSPGKYVGLAETIRGFKLILSGELDGLPEQAFYLVGNIDEATAKATNLEMESKLKK.

172-179 lines the ATP pocket; it reads GGAGVGKT.

This sequence belongs to the ATPase alpha/beta chains family. As to quaternary structure, F-type ATPases have 2 components, CF(1) - the catalytic core - and CF(0) - the membrane proton channel. CF(1) has five subunits: alpha(3), beta(3), gamma(1), delta(1), epsilon(1). CF(0) has four main subunits: a(1), b(1), b'(1) and c(9-12).

The protein localises to the plastid. It is found in the chloroplast thylakoid membrane. It catalyses the reaction ATP + H2O + 4 H(+)(in) = ADP + phosphate + 5 H(+)(out). In terms of biological role, produces ATP from ADP in the presence of a proton gradient across the membrane. The catalytic sites are hosted primarily by the beta subunits. The sequence is that of ATP synthase subunit beta, chloroplastic from Gossypium barbadense (Sea Island cotton).